Consider the following 279-residue polypeptide: Gas vesicle protein L2 (279 aa).

Belongs to the gas vesicle GvpF/GvpL family. GvpF to GvpM interact with each other in vitro, and may form multi-subunit complex(es). Interacts with GvpC, GvpN and GvpO.

It is found in the gas vesicle. Proteins GvpF to GvpM might be involved in nucleating gas vesicle formation. A minor component of the gas vesicle. Gas vesicles are hollow, gas filled proteinaceous nanostructures found in several microbial planktonic microorganisms. They allow positioning of halobacteria at the optimal depth for growth in the poorly aerated, shallow brine pools of their habitat. Functionally, expression of 2 c-vac DNA fragments containing 2 divergently transcribed regions (gvpE-gvpF-gvpG-gvpH-gvpI-gvpJ-gvpK-gvpL-gvpM and gvpA-gvpC-gvpN-gvpO) allows H.volcanii to produce gas vesicles. The protein is Gas vesicle protein L2 of Halobacterium salinarum (strain ATCC 700922 / JCM 11081 / NRC-1) (Halobacterium halobium).